The primary structure comprises 868 residues: DNA mismatch repair protein MutS (868 aa).

620 to 627 (GPNMGGKS) is a binding site for ATP.

It belongs to the DNA mismatch repair MutS family.

Functionally, this protein is involved in the repair of mismatches in DNA. It is possible that it carries out the mismatch recognition step. This protein has a weak ATPase activity. This chain is DNA mismatch repair protein MutS, found in Desulforamulus reducens (strain ATCC BAA-1160 / DSM 100696 / MI-1) (Desulfotomaculum reducens).